The sequence spans 43 residues: YKRCHKKGGHCFPKEKICTPPSSDFGKMDCRWKWKCCKKGSVN.

3 disulfides stabilise this stretch: cysteine 4–cysteine 36, cysteine 11–cysteine 30, and cysteine 18–cysteine 37.

The protein belongs to the crotamine-myotoxin family. Monomer. Expressed by the venom gland.

It localises to the secreted. Functionally, cationic peptide that possesses multiple functions. It acts as a cell-penetrating peptide (CPP), and as a potent voltage-gated potassium channel (Kv) inhibitor. It exhibits antimicrobial activities, hind limb paralysis, and severe muscle necrosis by a non-enzymatic mechanism. The sequence is that of Myotoxin-2 from Crotalus concolor (Midget faded rattlesnake).